The chain runs to 631 residues: uncharacterized protein (631 aa).

The signal sequence occupies residues 1-20; it reads MVRFVSILSLFGCAATLVTA. The Lumenal segment spans residues 21-105; it reads HDDMDMDMDM…AGNRSALRYH (85 aa). 2 N-linked (GlcNAc...) asparagine glycosylation sites follow: Asn-87 and Asn-98. A helical transmembrane segment spans residues 106 to 126; sequence IITLLLVAFVLYPVSLALSAA. Residues 127–131 are Cytoplasmic-facing; it reads RSRWY. A helical membrane pass occupies residues 132 to 152; it reads LPLLFVNLCICISSVMALSVF. Over 153–170 the chain is Lumenal; that stretch reads KNTFPEEDWYAHNIYGTT. A helical membrane pass occupies residues 171-191; sequence SVLLLVFMLVHFFAAVLSVPV. The Cytoplasmic portion of the chain corresponds to 192–322; that stretch reads SLASKKEYRP…LSCVANVVFH (131 aa). Positions 216–274 are disordered; the sequence is MVNSARGSPSPSSNRDTLFSLSSDTTTATATNNNKRRRAEGEDEGDNTSNHDTLRDEDY. A Phosphoserine modification is found at Ser-219. Residues 220 to 239 are compositionally biased toward polar residues; it reads ARGSPSPSSNRDTLFSLSSD. Lys-250 participates in a covalent cross-link: Glycyl lysine isopeptide (Lys-Gly) (interchain with G-Cter in ubiquitin). The helical transmembrane segment at 323-343 threads the bilayer; it reads MLTYPLFMYIFVDLIIGFAVG. Topologically, residues 344-351 are lumenal; the sequence is NLLGKGIR. The chain crosses the membrane as a helical span at residues 352–372; the sequence is IFNLLAHWIKGGVFFTLGVVS. Over 373–407 the chain is Cytoplasmic; the sequence is LARYCGFAAKYGWAWNNISFTSQLTQTRSSNLLFR. Residues 408–428 traverse the membrane as a helical segment; the sequence is FAPAGTFTMEFVESFLIFFYG. Over 429–451 the chain is Lumenal; the sequence is STNIFLEHLAGNGGAWTAKDLQH. The helical transmembrane segment at 452 to 472 threads the bilayer; that stretch reads VSIAFMFIGTGLCGLLTEYKL. Topologically, residues 473–529 are cytoplasmic; it reads NHWRFEHARKRPQTDVVAATPGYSPNPFPAFTIFWTGILMSQHAQSSQFSTTIHTQW. A helical membrane pass occupies residues 530-550; the sequence is GYLLSYGSFFRLLTFLILFLV. The Lumenal portion of the chain corresponds to 551 to 598; sequence PNTNSAASKPFTELITSFCLLCGGLVFMESTDQSIEAMEYRGFTPMFT. Residues 599–619 form a helical membrane-spanning segment; it reads FNLSVGFVSLLMAWEMILFIW. Over 620-631 the chain is Cytoplasmic; that stretch reads KDWLIKTRKTSL.

This sequence to S.pombe SpBC3B8.06.

The protein localises to the membrane. This is an uncharacterized protein from Saccharomyces cerevisiae (strain ATCC 204508 / S288c) (Baker's yeast).